We begin with the raw amino-acid sequence, 471 residues long: T-box transcription factor T (471 aa).

The segment at residues 24-196 is a DNA-binding region (T-box); that stretch reads LWTKFCSLTN…HNPFAKAFLD (173 aa).

In terms of tissue distribution, developing notochord.

It localises to the nucleus. Involved in the transcriptional regulation of genes required for mesoderm differentiation. The polypeptide is T-box transcription factor T (Halocynthia roretzi (Sea squirt)).